Consider the following 259-residue polypeptide: Type III pantothenate kinase (259 aa).

ATP is bound at residue 6–13; the sequence is DCGNTNTV. 107–110 contacts substrate; it reads GPDR. Aspartate 109 serves as the catalytic Proton acceptor. Aspartate 129 is a binding site for K(+). Residue threonine 132 participates in ATP binding. Threonine 184 lines the substrate pocket.

This sequence belongs to the type III pantothenate kinase family. As to quaternary structure, homodimer. Requires NH4(+) as cofactor. The cofactor is K(+).

Its subcellular location is the cytoplasm. It carries out the reaction (R)-pantothenate + ATP = (R)-4'-phosphopantothenate + ADP + H(+). The protein operates within cofactor biosynthesis; coenzyme A biosynthesis; CoA from (R)-pantothenate: step 1/5. Functionally, catalyzes the phosphorylation of pantothenate (Pan), the first step in CoA biosynthesis. The chain is Type III pantothenate kinase from Jannaschia sp. (strain CCS1).